The chain runs to 340 residues: MREPGFWHRPPSLVSRLLLPIAAIYGNIAAARMQKAGTTVGVPVLCVGNYHMGGAGKTPTTLALVALLREFGETPVVLSRGYGGRLQGPVQVDPSRHSAADIGDEPLMMARRLAVVVARDRTDGAALACALGATVILMDDGFQNPALTKDASLIVVDSHRSIGNGSVFPAGPLRAPLPLQVARTDALVVVGDGAAADGLAQQITTKGGVVLRARLVPEPASVEALRGRRVLAFAGIGDPARFVATLRGSGVEVVEQRAFADHHPFTAEELAELAAAAKRDGLTLVTTEKDLARIGRAQQALGVEIVPFAVTLAFGDEAKLRLFLLDRLNGARAAKLAGRR.

ATP is bound at residue 51-58 (HMGGAGKT).

It belongs to the LpxK family.

The enzyme catalyses a lipid A disaccharide + ATP = a lipid IVA + ADP + H(+). The protein operates within glycolipid biosynthesis; lipid IV(A) biosynthesis; lipid IV(A) from (3R)-3-hydroxytetradecanoyl-[acyl-carrier-protein] and UDP-N-acetyl-alpha-D-glucosamine: step 6/6. Functionally, transfers the gamma-phosphate of ATP to the 4'-position of a tetraacyldisaccharide 1-phosphate intermediate (termed DS-1-P) to form tetraacyldisaccharide 1,4'-bis-phosphate (lipid IVA). This chain is Tetraacyldisaccharide 4'-kinase, found in Rhodopseudomonas palustris (strain TIE-1).